Reading from the N-terminus, the 315-residue chain is Phosphatidylglycerol--prolipoprotein diacylglyceryl transferase (315 aa).

2 helical membrane-spanning segments follow: residues Phe-19 to Leu-39 and Val-93 to Leu-113. Position 141 (Arg-141) interacts with a 1,2-diacyl-sn-glycero-3-phospho-(1'-sn-glycerol). The next 2 helical transmembrane spans lie at Leu-188–Ile-208 and Val-256–Tyr-276.

The protein belongs to the Lgt family.

It is found in the cell membrane. The catalysed reaction is L-cysteinyl-[prolipoprotein] + a 1,2-diacyl-sn-glycero-3-phospho-(1'-sn-glycerol) = an S-1,2-diacyl-sn-glyceryl-L-cysteinyl-[prolipoprotein] + sn-glycerol 1-phosphate + H(+). It participates in protein modification; lipoprotein biosynthesis (diacylglyceryl transfer). Functionally, catalyzes the transfer of the diacylglyceryl group from phosphatidylglycerol to the sulfhydryl group of the N-terminal cysteine of a prolipoprotein, the first step in the formation of mature lipoproteins. This Bifidobacterium longum (strain NCC 2705) protein is Phosphatidylglycerol--prolipoprotein diacylglyceryl transferase.